A 196-amino-acid polypeptide reads, in one-letter code: Peptidyl-tRNA hydrolase (196 aa).

His15 lines the tRNA pocket. His20 acts as the Proton acceptor in catalysis. TRNA-binding residues include Tyr66, Asn68, and Asn114.

Belongs to the PTH family. In terms of assembly, monomer.

It localises to the cytoplasm. It catalyses the reaction an N-acyl-L-alpha-aminoacyl-tRNA + H2O = an N-acyl-L-amino acid + a tRNA + H(+). Its function is as follows. Hydrolyzes ribosome-free peptidyl-tRNAs (with 1 or more amino acids incorporated), which drop off the ribosome during protein synthesis, or as a result of ribosome stalling. Functionally, catalyzes the release of premature peptidyl moieties from peptidyl-tRNA molecules trapped in stalled 50S ribosomal subunits, and thus maintains levels of free tRNAs and 50S ribosomes. This is Peptidyl-tRNA hydrolase from Polynucleobacter necessarius subsp. necessarius (strain STIR1).